Consider the following 260-residue polypeptide: Phosphate import ATP-binding protein PstB (260 aa).

The ABC transporter domain occupies 13–255 (MRAQGVNVFY…PKQERTKDYI (243 aa)). ATP is bound at residue 45 to 52 (GPSGCGKS).

The protein belongs to the ABC transporter superfamily. Phosphate importer (TC 3.A.1.7) family. In terms of assembly, the complex is composed of two ATP-binding proteins (PstB), two transmembrane proteins (PstC and PstA) and a solute-binding protein (PstS).

Its subcellular location is the cell inner membrane. It catalyses the reaction phosphate(out) + ATP + H2O = ADP + 2 phosphate(in) + H(+). Functionally, part of the ABC transporter complex PstSACB involved in phosphate import. Responsible for energy coupling to the transport system. In Sphingopyxis alaskensis (strain DSM 13593 / LMG 18877 / RB2256) (Sphingomonas alaskensis), this protein is Phosphate import ATP-binding protein PstB.